The sequence spans 825 residues: Taste receptor cell protein 1 (825 aa).

The first 21 residues, 1 to 21 (MDKQWFPAAGILLAALLVVSA), serve as a signal peptide directing secretion. 2 disordered regions span residues 66 to 97 (EREP…GPSG) and 299 to 322 (TSPS…SASP). Over residues 302 to 322 (SQASSLHSPRPSSASPLSASP) the composition is skewed to low complexity.

In terms of tissue distribution, expression is restricted to circumvallate papillae.

This chain is Taste receptor cell protein 1 (Trcg1), found in Mus musculus (Mouse).